Here is a 445-residue protein sequence, read N- to C-terminus: Exodeoxyribonuclease 7 large subunit (445 aa).

The protein belongs to the XseA family. In terms of assembly, heterooligomer composed of large and small subunits.

It is found in the cytoplasm. The enzyme catalyses Exonucleolytic cleavage in either 5'- to 3'- or 3'- to 5'-direction to yield nucleoside 5'-phosphates.. Functionally, bidirectionally degrades single-stranded DNA into large acid-insoluble oligonucleotides, which are then degraded further into small acid-soluble oligonucleotides. In Shewanella halifaxensis (strain HAW-EB4), this protein is Exodeoxyribonuclease 7 large subunit.